The chain runs to 396 residues: Elongation factor Tu (396 aa).

Residues 10–206 (KPHVNIGTIG…AVDAYIPEPE (197 aa)) enclose the tr-type G domain. The tract at residues 19 to 26 (GHVDHGKT) is G1. A GTP-binding site is contributed by 19–26 (GHVDHGKT). Mg(2+) is bound at residue Thr-26. The interval 60-64 (GITIA) is G2. The segment at 81–84 (DCPG) is G3. GTP contacts are provided by residues 81–85 (DCPGH) and 136–139 (NKAD). The G4 stretch occupies residues 136–139 (NKAD). Residues 174-176 (SAL) form a G5 region.

This sequence belongs to the TRAFAC class translation factor GTPase superfamily. Classic translation factor GTPase family. EF-Tu/EF-1A subfamily. As to quaternary structure, monomer.

It is found in the cytoplasm. It catalyses the reaction GTP + H2O = GDP + phosphate + H(+). GTP hydrolase that promotes the GTP-dependent binding of aminoacyl-tRNA to the A-site of ribosomes during protein biosynthesis. The polypeptide is Elongation factor Tu (Geobacter metallireducens (strain ATCC 53774 / DSM 7210 / GS-15)).